Here is a 121-residue protein sequence, read N- to C-terminus: Large ribosomal subunit protein uL24 (121 aa).

This sequence belongs to the universal ribosomal protein uL24 family. As to quaternary structure, part of the 50S ribosomal subunit.

Functionally, one of two assembly initiator proteins, it binds directly to the 5'-end of the 23S rRNA, where it nucleates assembly of the 50S subunit. In terms of biological role, located at the polypeptide exit tunnel on the outside of the subunit. The sequence is that of Large ribosomal subunit protein uL24 from Pyrococcus horikoshii (strain ATCC 700860 / DSM 12428 / JCM 9974 / NBRC 100139 / OT-3).